The primary structure comprises 242 residues: ATP synthase subunit a (242 aa).

5 helical membrane passes run 21-41 (LSSI…AIIC), 79-99 (FHFL…LGLP), 116-136 (DATV…FYGV), 173-193 (LYGN…LVTG), and 198-218 (AWGW…SIFI).

It belongs to the ATPase A chain family. In terms of assembly, F-type ATPases have 2 components, CF(1) - the catalytic core - and CF(0) - the membrane proton channel. CF(1) has five subunits: alpha(3), beta(3), gamma(1), delta(1), epsilon(1). CF(0) has three main subunits: a(1), b(2) and c(9-12). The alpha and beta chains form an alternating ring which encloses part of the gamma chain. CF(1) is attached to CF(0) by a central stalk formed by the gamma and epsilon chains, while a peripheral stalk is formed by the delta and b chains.

Its subcellular location is the cell membrane. In terms of biological role, key component of the proton channel; it plays a direct role in the translocation of protons across the membrane. The protein is ATP synthase subunit a of Staphylococcus saprophyticus subsp. saprophyticus (strain ATCC 15305 / DSM 20229 / NCIMB 8711 / NCTC 7292 / S-41).